A 332-amino-acid polypeptide reads, in one-letter code: MATLKDQLIHNLLKEEQTPQNKITVVGVGAVGMACAISILMKDLADELALVDVIEDKLKGEMMDLQHGSLFLRTPKIVSGKDYNVTANSKLVIITAGARQQEGESRLNLVQRNVNIFKFIIPNVVKYSPNCKLLIVSNPVDILTYVAWKISGFPKNRVIGSGCNLDSARFRYLMGERLGVHPLSCHGWVLGEHGDSSVPVWSGMNVAGVSLKTLHPDLGTDKDKEQWKEVHKQVVESAYEVIKLKGYTSWAIGLSVADLAESIMKNLRRVHPVSTMIKGLYGIKDDVFLSVPCILGQNGISDLVKVTLTSEEEARLKKSADTLWGIQKELQF.

Residue Ala2 is modified to N-acetylalanine. Lys5 bears the N6-acetyllysine; alternate mark. Residue Lys5 is modified to N6-succinyllysine; alternate. Lys14 is subject to N6-acetyllysine. Thr18 carries the post-translational modification Phosphothreonine. 29 to 57 serves as a coordination point for NAD(+); sequence GAVGMACAISILMKDLADELALVDVIEDK. Lys57 carries the post-translational modification N6-acetyllysine; alternate. Residue Lys57 forms a Glycyl lysine isopeptide (Lys-Gly) (interchain with G-Cter in SUMO2); alternate linkage. Lys81 is modified (N6-acetyllysine). Arg99 serves as a coordination point for NAD(+). A substrate-binding site is contributed by Arg106. An N6-acetyllysine; alternate modification is found at Lys118. Position 118 is an N6-succinyllysine; alternate (Lys118). N6-acetyllysine is present on Lys126. Substrate is bound by residues Asn138 and Arg169. Residue His193 is the Proton acceptor of the active site. N6-acetyllysine is present on residues Lys224 and Lys232. Tyr239 carries the phosphotyrosine modification. The residue at position 243 (Lys243) is an N6-acetyllysine. Thr248 provides a ligand contact to substrate. Thr309 carries the post-translational modification Phosphothreonine. Ser310 is subject to Phosphoserine. N6-acetyllysine; alternate is present on Lys318. Position 318 is an N6-succinyllysine; alternate (Lys318). Thr322 bears the Phosphothreonine mark.

The protein belongs to the LDH/MDH superfamily. LDH family. In terms of assembly, homotetramer. Interacts with PTEN upstream reading frame protein MP31. Post-translationally, ISGylated.

It is found in the cytoplasm. It catalyses the reaction (S)-lactate + NAD(+) = pyruvate + NADH + H(+). It participates in fermentation; pyruvate fermentation to lactate; (S)-lactate from pyruvate: step 1/1. In terms of biological role, interconverts simultaneously and stereospecifically pyruvate and lactate with concomitant interconversion of NADH and NAD(+). In Pan troglodytes (Chimpanzee), this protein is L-lactate dehydrogenase A chain (LDHA).